Reading from the N-terminus, the 275-residue chain is tRNA pseudouridine synthase A (275 aa).

Asp-55 (nucleophile) is an active-site residue. Tyr-111 serves as a coordination point for substrate.

It belongs to the tRNA pseudouridine synthase TruA family.

It catalyses the reaction uridine(38/39/40) in tRNA = pseudouridine(38/39/40) in tRNA. In terms of biological role, formation of pseudouridine at positions 38, 39 and 40 in the anticodon stem and loop of transfer RNAs. The protein is tRNA pseudouridine synthase A of Methanococcoides burtonii (strain DSM 6242 / NBRC 107633 / OCM 468 / ACE-M).